A 178-amino-acid polypeptide reads, in one-letter code: MSVEVSNESGFDVSEVELVSVARFVIIKMDVNPAAELSMVLLDTAAMADLHMRWMDLPGPTDVMSFPMDEFEPGGRPDAAEPGPSMLGDIVLCPEFAAQQAAAEGHSLGHELALLTIHGVLHLLGYDHGEPDEEKEMFALQGRLLEEWVAEQVRAYQHDRQNEKDCRLLYKSGYFGYL.

The Zn(2+) site is built by H118, H122, and H128.

Belongs to the endoribonuclease YbeY family. Zn(2+) serves as cofactor.

The protein resides in the cytoplasm. Single strand-specific metallo-endoribonuclease involved in late-stage 70S ribosome quality control and in maturation of the 3' terminus of the 16S rRNA. The chain is Endoribonuclease YbeY from Mycobacterium leprae (strain Br4923).